We begin with the raw amino-acid sequence, 431 residues long: Serine hydroxymethyltransferase (431 aa).

(6S)-5,6,7,8-tetrahydrofolate is bound by residues leucine 128 and 132-134; that span reads GHL. Lysine 237 bears the N6-(pyridoxal phosphate)lysine mark.

Belongs to the SHMT family. Homodimer. Requires pyridoxal 5'-phosphate as cofactor.

Its subcellular location is the cytoplasm. It catalyses the reaction (6R)-5,10-methylene-5,6,7,8-tetrahydrofolate + glycine + H2O = (6S)-5,6,7,8-tetrahydrofolate + L-serine. It functions in the pathway one-carbon metabolism; tetrahydrofolate interconversion. It participates in amino-acid biosynthesis; glycine biosynthesis; glycine from L-serine: step 1/1. In terms of biological role, catalyzes the reversible interconversion of serine and glycine with tetrahydrofolate (THF) serving as the one-carbon carrier. This reaction serves as the major source of one-carbon groups required for the biosynthesis of purines, thymidylate, methionine, and other important biomolecules. Also exhibits THF-independent aldolase activity toward beta-hydroxyamino acids, producing glycine and aldehydes, via a retro-aldol mechanism. In Ruegeria pomeroyi (strain ATCC 700808 / DSM 15171 / DSS-3) (Silicibacter pomeroyi), this protein is Serine hydroxymethyltransferase.